The following is a 564-amino-acid chain: Major facilitator superfamily transporter MPN_076 (564 aa).

A run of 12 helical transmembrane segments spans residues 1-21, 65-85, 89-109, 176-196, 220-240, 249-269, 306-326, 358-378, 404-424, 425-445, 457-477, and 501-521; these read MLWA…FVID, ITLL…KFGY, VMIM…GDPL, IAGY…GTTL, NLWG…FQSV, VFIL…FAWF, MIGM…GGWW, AGLP…YMVF, IVIV…FAFV, AIAT…ILIL, VSVL…AFDI, and GAIA…AIVV.

This sequence belongs to the major facilitator superfamily.

The protein localises to the cell membrane. The protein is Major facilitator superfamily transporter MPN_076 of Mycoplasma pneumoniae (strain ATCC 29342 / M129 / Subtype 1) (Mycoplasmoides pneumoniae).